A 202-amino-acid polypeptide reads, in one-letter code: Dephospho-CoA kinase (202 aa).

The 197-residue stretch at 6–202 (KVSITGDLSS…EYFYALKGAL (197 aa)) folds into the DPCK domain. 14–19 (SSGKTE) provides a ligand contact to ATP.

The protein belongs to the CoaE family.

The protein resides in the cytoplasm. It carries out the reaction 3'-dephospho-CoA + ATP = ADP + CoA + H(+). Its pathway is cofactor biosynthesis; coenzyme A biosynthesis; CoA from (R)-pantothenate: step 5/5. Functionally, catalyzes the phosphorylation of the 3'-hydroxyl group of dephosphocoenzyme A to form coenzyme A. This is Dephospho-CoA kinase from Chlamydia pneumoniae (Chlamydophila pneumoniae).